The sequence spans 242 residues: Small ribosomal subunit protein uS3 (242 aa).

In terms of domain architecture, KH type-2 spans 39-110 (IRRFIHKKYG…QVRINVVEVE (72 aa)). Residues 216 to 242 (QSMPVGASPRRRGNRRPQQFEDRSNEG) form a disordered region. Residues 233–242 (QQFEDRSNEG) show a composition bias toward basic and acidic residues.

The protein belongs to the universal ribosomal protein uS3 family. In terms of assembly, part of the 30S ribosomal subunit. Forms a tight complex with proteins S10 and S14.

Binds the lower part of the 30S subunit head. Binds mRNA in the 70S ribosome, positioning it for translation. The protein is Small ribosomal subunit protein uS3 of Prochlorococcus marinus (strain MIT 9303).